The primary structure comprises 316 residues: tRNA dimethylallyltransferase (316 aa).

Residue 13–20 coordinates ATP; sequence GPTAVGKT. 15 to 20 serves as a coordination point for substrate; sequence TAVGKT. Positions 38–41 are interaction with substrate tRNA; the sequence is DSIQ.

This sequence belongs to the IPP transferase family. Monomer. The cofactor is Mg(2+).

It carries out the reaction adenosine(37) in tRNA + dimethylallyl diphosphate = N(6)-dimethylallyladenosine(37) in tRNA + diphosphate. Its function is as follows. Catalyzes the transfer of a dimethylallyl group onto the adenine at position 37 in tRNAs that read codons beginning with uridine, leading to the formation of N6-(dimethylallyl)adenosine (i(6)A). The sequence is that of tRNA dimethylallyltransferase from Staphylococcus carnosus (strain TM300).